Consider the following 72-residue polypeptide: Seed trypsin/chymotrypsin inhibitor IVB (72 aa).

7 cysteine pairs are disulfide-bonded: Cys-8–Cys-61, Cys-9–Cys-24, Cys-12–Cys-57, Cys-14–Cys-22, Cys-31–Cys-38, Cys-35–Cys-50, and Cys-40–Cys-48.

Belongs to the Bowman-Birk serine protease inhibitor family. As to expression, seed.

Its function is as follows. Inhibitor of trypsin and of chymotrypsin. May function as a natural phytochemical defense against predators. In Pisum sativum (Garden pea), this protein is Seed trypsin/chymotrypsin inhibitor IVB.